Consider the following 237-residue polypeptide: Leucyl/phenylalanyl-tRNA--protein transferase (237 aa).

It belongs to the L/F-transferase family.

The protein localises to the cytoplasm. It catalyses the reaction N-terminal L-lysyl-[protein] + L-leucyl-tRNA(Leu) = N-terminal L-leucyl-L-lysyl-[protein] + tRNA(Leu) + H(+). It carries out the reaction N-terminal L-arginyl-[protein] + L-leucyl-tRNA(Leu) = N-terminal L-leucyl-L-arginyl-[protein] + tRNA(Leu) + H(+). The enzyme catalyses L-phenylalanyl-tRNA(Phe) + an N-terminal L-alpha-aminoacyl-[protein] = an N-terminal L-phenylalanyl-L-alpha-aminoacyl-[protein] + tRNA(Phe). Functionally, functions in the N-end rule pathway of protein degradation where it conjugates Leu, Phe and, less efficiently, Met from aminoacyl-tRNAs to the N-termini of proteins containing an N-terminal arginine or lysine. The sequence is that of Leucyl/phenylalanyl-tRNA--protein transferase (aat) from Vibrio vulnificus (strain CMCP6).